A 345-amino-acid chain; its full sequence is MQRLVAWDPACLPLPPPPPAFKSMEVANFYYEADCLAAAYGGKAAPAAPPAARPGPRPPAGELGSIGDHERAIDFSPYLEPLGAPQAPAPATATDTFEAAPPAPAPAPASSGQHHDFLSDLFSDDYGGKNCKKPAEYGYVSLGRLGAAKGALHPGCFAPLHPPPPPPPPPAELKAEPGFEPADCKRKEEAGAPGGGAGMAAGFPYALRAYLGYQAVPSGSSGSLSTSSSSSPPGTPSPADAKAPPTACYAGAAPAPSQVKSKAKKTVDKHSDEYKIRRERNNIAVRKSRDKAKMRNLETQHKVLELTAENERLQKKVEQLSRELSTLRNLFKQLPEPLLASSGHC.

The segment at 1–24 (MQRLVAWDPACLPLPPPPPAFKSM) is required for Lys-174 sumoylation. At Arg-3 the chain carries Asymmetric dimethylarginine; by CARM1. The required for MYC transcriptional repression stretch occupies residues 24–135 (MEVANFYYEA…YGGKNCKKPA (112 aa)). N6-acetyllysine; alternate is present on Lys-43. An N6-methylated lysine; alternate modification is found at Lys-43. Disordered stretches follow at residues 46–67 (PAAPPAARPGPRPPAGELGSIG) and 79–116 (LEPLGAPQAPAPATATDTFEAAPPAPAPAPASSGQHHD). Over residues 47 to 59 (AAPPAARPGPRPP) the composition is skewed to pro residues. A compositionally biased stretch (low complexity) spans 84–100 (APQAPAPATATDTFEAA). Residues 116 to 124 (DFLSDLFSD) carry the 9aaTAD motif. Lys-129 and Lys-132 each carry N6-acetyllysine; by KAT2A and KAT2B. An N6-acetyllysine; by KAT2A and KAT2B; alternate modification is found at Lys-133. Residue Lys-133 forms a Glycyl lysine isopeptide (Lys-Gly) (interchain with G-Cter in SUMO2); alternate linkage. Residues 157–178 (FAPLHPPPPPPPPPAELKAEPG) are disordered. Residues 160–171 (LHPPPPPPPPPA) show a composition bias toward pro residues. Lys-174 participates in a covalent cross-link: Glycyl lysine isopeptide (Lys-Gly) (interchain with G-Cter in SUMO2); alternate. Lys-174 participates in a covalent cross-link: Glycyl lysine isopeptide (Lys-Gly) (interchain with G-Cter in SUMO); alternate. Residues Lys-185 and Lys-187 each participate in a glycyl lysine isopeptide (Lys-Gly) (interchain with G-Cter in SUMO2) cross-link. Residues 218–232 (SGSSGSLSTSSSSSP) show a composition bias toward low complexity. The segment at 218-271 (SGSSGSLSTSSSSSPPGTPSPADAKAPPTACYAGAAPAPSQVKSKAKKTVDKHS) is disordered. Thr-226 is modified (phosphothreonine; by GSK3-beta). 2 O-linked (GlcNAc) serine glycosylation sites follow: Ser-227 and Ser-228. Ser-231 carries the phosphoserine; by GSK3-beta modification. At Thr-235 the chain carries Phosphothreonine; by RPS6KA1, CDK2 and MAPK. Glycyl lysine isopeptide (Lys-Gly) (interchain with G-Cter in SUMO2) cross-links involve residues Lys-260 and Lys-262. Thr-266 carries the post-translational modification Phosphothreonine; by RPS6KA1 and PKC/PRKCA. The 64-residue stretch at 271–334 (SDEYKIRRER…STLRNLFKQL (64 aa)) folds into the bZIP domain. The tract at residues 275 to 295 (KIRRERNNIAVRKSRDKAKMR) is basic motif. Phosphoserine; by PKC/PRKCA is present on Ser-288. Residues 297 to 304 (LETQHKVL) form a leucine-zipper region. Ser-325 carries the post-translational modification Phosphoserine; by CaMK2. Lys-332 participates in a covalent cross-link: Glycyl lysine isopeptide (Lys-Gly) (interchain with G-Cter in SUMO2).

It belongs to the bZIP family. C/EBP subfamily. As to quaternary structure, binds DNA as a homodimer and as a heterodimer. Interacts with ATF4. Binds DNA as a heterodimer with ATF4. Interacts with MYB; within the complex, MYB and CEBPB bind to different promoter regions. Can form stable heterodimers with CEBPD. Can form stable heterodimers with CEBPA and CEBPE. Interacts with SIX1. Isoform 2 and isoform 3 also form heterodimers. Interacts with TRIM28 and PTGES2. Interacts with PRDM16. Interacts with CCDC85B. Forms a complex with THOC5. Interacts with ZNF638; this interaction increases transcriptional activation. Interacts with CIDEA and CIDEC; these interactions increase transcriptional activation of a subset of CEBPB downstream target genes. Interacts with DDIT3/CHOP. Interacts with EP300; recruits EP300 to chromatin. Interacts with RORA; the interaction disrupts interaction with EP300. Interacts (not methylated) with MED23, MED26, SMARCA2, SMARCB1 and SMARCC1. Interacts with KAT2A and KAT2B. Interacts with ATF5; EP300 is required for ATF5 and CEBPB interaction and DNA binding. Interacts with NFE2L1; the heterodimer represses expression of DSPP during odontoblast differentiation. Methylated. Methylation at Arg-3 by CARM1 and at Lys-43 by EHMT2 inhibit transactivation activity. Methylation is probably inhibited by phosphorylation at Thr-235. In terms of processing, sumoylated by polymeric chains of SUMO2 or SUMO3. Sumoylation at Lys-174 is required for inhibition of T-cells proliferation. In adipocytes, sumoylation at Lys-174 by PIAS1 leads to ubiquitination and subsequent proteasomal degradation. Desumoylated by SENP2, which abolishes ubiquitination and stabilizes protein levels. Post-translationally, ubiquitinated, leading to proteasomal degradation. Phosphorylated at Thr-235 by MAPK and CDK2, serves to prime phosphorylation at Thr-226 and Ser-231 by GSK3B and acquire DNA-binding as well as transactivation activities, required to induce adipogenesis. MAPK and CDK2 act sequentially to maintain Thr-235 in the primed phosphorylated state during mitotical cloning expansion and thereby progression of terminal differentiation. Phosphorylation at Thr-266 enhances transactivation activity. Phosphorylation at Ser-325 in response to calcium increases transactivation activity. Phosphorylated at Thr-235 by RPS6KA1. In terms of processing, O-glycosylated, glycosylation at Ser-227 and Ser-228 prevents phosphorylation on Thr-235, Ser-231 and Thr-226 and DNA binding activity which delays the adipocyte differentiation program. Post-translationally, acetylated. Acetylation at Lys-43 is an important and dynamic regulatory event that contributes to its ability to transactivate target genes, including those associated with adipogenesis and adipocyte function. Deacetylation by HDAC1 represses its transactivation activity. Acetylated by KAT2A and KAT2B within a cluster of lysine residues between amino acids 129-133, this acetylation is strongly induced by glucocorticoid treatment and enhances transactivation activity. Expressed at low levels in the lung, kidney and spleen.

It localises to the nucleus. The protein localises to the cytoplasm. Important transcription factor regulating the expression of genes involved in immune and inflammatory responses. Also plays a significant role in adipogenesis, as well as in the gluconeogenic pathway, liver regeneration, and hematopoiesis. The consensus recognition site is 5'-T[TG]NNGNAA[TG]-3'. Its functional capacity is governed by protein interactions and post-translational protein modifications. During early embryogenesis, plays essential and redundant roles with CEBPA. Has a promitotic effect on many cell types such as hepatocytes and adipocytes but has an antiproliferative effect on T-cells by repressing MYC expression, facilitating differentiation along the T-helper 2 lineage. Binds to regulatory regions of several acute-phase and cytokines genes and plays a role in the regulation of acute-phase reaction and inflammation. Also plays a role in intracellular bacteria killing. During adipogenesis, is rapidly expressed and, after activation by phosphorylation, induces CEBPA and PPARG, which turn on the series of adipocyte genes that give rise to the adipocyte phenotype. The delayed transactivation of the CEBPA and PPARG genes by CEBPB appears necessary to allow mitotic clonal expansion and thereby progression of terminal differentiation. Essential for female reproduction because of a critical role in ovarian follicle development. Restricts osteoclastogenesis: together with NFE2L1; represses expression of DSPP during odontoblast differentiation. In terms of biological role, essential for gene expression induction in activated macrophages. Plays a major role in immune responses such as CD4(+) T-cell response, granuloma formation and endotoxin shock. Not essential for intracellular bacteria killing. Functionally, acts as a dominant negative through heterodimerization with isoform 2. Promotes osteoblast differentiation and osteoclastogenesis. The sequence is that of CCAAT/enhancer-binding protein beta from Homo sapiens (Human).